We begin with the raw amino-acid sequence, 463 residues long: Phosphoglucosamine mutase (463 aa).

Catalysis depends on S102, which acts as the Phosphoserine intermediate. Residues S102, D240, D242, and D244 each contribute to the Mg(2+) site. S102 carries the post-translational modification Phosphoserine.

The protein belongs to the phosphohexose mutase family. It depends on Mg(2+) as a cofactor. Post-translationally, activated by phosphorylation.

It catalyses the reaction alpha-D-glucosamine 1-phosphate = D-glucosamine 6-phosphate. Functionally, catalyzes the conversion of glucosamine-6-phosphate to glucosamine-1-phosphate. This chain is Phosphoglucosamine mutase, found in Mycobacterium leprae (strain Br4923).